We begin with the raw amino-acid sequence, 695 residues long: Elongation factor G 2 (695 aa).

The region spanning 5-280 (SKYRNIGIFA…AVVDYLPSPT (276 aa)) is the tr-type G domain. GTP-binding positions include 14–21 (AHVDAGKT), 78–82 (DTPGH), and 132–135 (NKLD).

The protein belongs to the TRAFAC class translation factor GTPase superfamily. Classic translation factor GTPase family. EF-G/EF-2 subfamily.

Its subcellular location is the cytoplasm. Functionally, catalyzes the GTP-dependent ribosomal translocation step during translation elongation. During this step, the ribosome changes from the pre-translocational (PRE) to the post-translocational (POST) state as the newly formed A-site-bound peptidyl-tRNA and P-site-bound deacylated tRNA move to the P and E sites, respectively. Catalyzes the coordinated movement of the two tRNA molecules, the mRNA and conformational changes in the ribosome. In Photobacterium profundum (strain SS9), this protein is Elongation factor G 2.